The following is a 210-amino-acid chain: Ribosomal RNA small subunit methyltransferase G (210 aa).

S-adenosyl-L-methionine contacts are provided by residues glycine 77, phenylalanine 82, 100–102, 128–129, and arginine 141; these read ERS and VE.

It belongs to the methyltransferase superfamily. RNA methyltransferase RsmG family.

It localises to the cytoplasm. Functionally, specifically methylates the N7 position of a guanine in 16S rRNA. The chain is Ribosomal RNA small subunit methyltransferase G from Borrelia recurrentis (strain A1).